Here is a 270-residue protein sequence, read N- to C-terminus: NAD(P)H-hydrate epimerase (270 aa).

One can recognise a YjeF N-terminal domain in the interval 25 to 234 (FQQLMDLMQN…DLLAPEAIYQ (210 aa)). A (6S)-NADPHX-binding site is contributed by 73–77 (DNGGQ). K(+) is bound by residues N74 and D144. Residues 148 to 154 (GVGLYGH) and E177 contribute to the (6S)-NADPHX site. T180 serves as a coordination point for K(+).

The protein belongs to the NnrE/AIBP family. The cofactor is K(+).

The enzyme catalyses (6R)-NADHX = (6S)-NADHX. It carries out the reaction (6R)-NADPHX = (6S)-NADPHX. Its function is as follows. Catalyzes the epimerization of the S- and R-forms of NAD(P)HX, a damaged form of NAD(P)H that is a result of enzymatic or heat-dependent hydration. This is a prerequisite for the S-specific NAD(P)H-hydrate dehydratase to allow the repair of both epimers of NAD(P)HX. The protein is NAD(P)H-hydrate epimerase of Legionella pneumophila (strain Corby).